The sequence spans 377 residues: uncharacterized protein (377 aa).

The tract at residues 1–46 is disordered; sequence MLAGLRRRGSMTTPPGPEIPPPHQGGFYSAGHHPQRPWPETPPPKT. Composition is skewed to pro residues over residues 14–23 and 36–45; these read PPGPEIPPPH and RPWPETPPPK. A helical transmembrane segment spans residues 53–73; that stretch reads MLGAVALLAVVGVTVAVTLAV. The tract at residues 77 to 107 is disordered; it reads DKRDAIPPGSGVSGSPTASDIASADDSGPVS.

The protein localises to the cell inner membrane. Functionally, may be involved in the ESX-1 / type VII specialized secretion system (T7SS), which exports several proteins including EsxA and EsxB. Involved in DNA conjugation in the recipient strain. This is an uncharacterized protein from Mycolicibacterium smegmatis (strain MKD8) (Mycobacterium smegmatis).